An 864-amino-acid polypeptide reads, in one-letter code: DNA mismatch repair protein MutS (864 aa).

607–614 (GPNMGGKS) contributes to the ATP binding site.

This sequence belongs to the DNA mismatch repair MutS family.

Its function is as follows. This protein is involved in the repair of mismatches in DNA. It is possible that it carries out the mismatch recognition step. This protein has a weak ATPase activity. The sequence is that of DNA mismatch repair protein MutS from Neisseria meningitidis serogroup C (strain 053442).